The sequence spans 227 residues: Adenylate kinase (227 aa).

21–26 provides a ligand contact to ATP; sequence GAGKGT. The interval 41 to 70 is NMP; the sequence is ATGDMLRSQVAKQTPLGIEAKKIMDDGKLV. Residues T42, R47, 68 to 70, 97 to 100, and Q104 contribute to the AMP site; these read KLV and GFPR. The interval 138 to 175 is LID; that stretch reads GRLVHPASGRSYHKVFNPPKTEMKDDITGEDLVQRSDD. ATP contacts are provided by residues R139 and 148–149; that span reads SY. AMP contacts are provided by R172 and R183. Q211 contributes to the ATP binding site.

It belongs to the adenylate kinase family. AK2 subfamily. Monomer.

It is found in the cytoplasm. It localises to the cytosol. The protein resides in the mitochondrion intermembrane space. The catalysed reaction is AMP + ATP = 2 ADP. Functionally, catalyzes the reversible transfer of the terminal phosphate group between ATP and AMP. Plays an important role in cellular energy homeostasis and in adenine nucleotide metabolism. Adenylate kinase activity is critical for regulation of the phosphate utilization and the AMP de novo biosynthesis pathways. This is Adenylate kinase from Kluyveromyces lactis (strain ATCC 8585 / CBS 2359 / DSM 70799 / NBRC 1267 / NRRL Y-1140 / WM37) (Yeast).